Consider the following 225-residue polypeptide: Ribonuclease HII (225 aa).

The RNase H type-2 domain occupies 35–225 (GLVAGVDEVG…SFRPCQISLD (191 aa)). 3 residues coordinate a divalent metal cation: D41, E42, and D137.

It belongs to the RNase HII family. The cofactor is Mn(2+). Requires Mg(2+) as cofactor.

Its subcellular location is the cytoplasm. The enzyme catalyses Endonucleolytic cleavage to 5'-phosphomonoester.. Its function is as follows. Endonuclease that specifically degrades the RNA of RNA-DNA hybrids. This chain is Ribonuclease HII, found in Trichormus variabilis (strain ATCC 29413 / PCC 7937) (Anabaena variabilis).